Here is a 702-residue protein sequence, read N- to C-terminus: Polyphosphate kinase (702 aa).

Asn-55 is an ATP binding site. Positions 389 and 419 each coordinate Mg(2+). His-449 serves as the catalytic Phosphohistidine intermediate. ATP contacts are provided by Tyr-482, Arg-578, and His-606.

It belongs to the polyphosphate kinase 1 (PPK1) family. Requires Mg(2+) as cofactor. Post-translationally, an intermediate of this reaction is the autophosphorylated ppk in which a phosphate is covalently linked to a histidine residue through a N-P bond.

It catalyses the reaction [phosphate](n) + ATP = [phosphate](n+1) + ADP. Functionally, catalyzes the reversible transfer of the terminal phosphate of ATP to form a long-chain polyphosphate (polyP). The chain is Polyphosphate kinase from Bacillus anthracis.